Reading from the N-terminus, the 412-residue chain is Serine hydroxymethyltransferase (412 aa).

Residues Leu117 and 121–123 (GHL) each bind (6S)-5,6,7,8-tetrahydrofolate. N6-(pyridoxal phosphate)lysine is present on Lys226.

The protein belongs to the SHMT family. As to quaternary structure, homodimer. Pyridoxal 5'-phosphate serves as cofactor.

It is found in the cytoplasm. It carries out the reaction (6R)-5,10-methylene-5,6,7,8-tetrahydrofolate + glycine + H2O = (6S)-5,6,7,8-tetrahydrofolate + L-serine. The protein operates within one-carbon metabolism; tetrahydrofolate interconversion. It participates in amino-acid biosynthesis; glycine biosynthesis; glycine from L-serine: step 1/1. Functionally, catalyzes the reversible interconversion of serine and glycine with tetrahydrofolate (THF) serving as the one-carbon carrier. This reaction serves as the major source of one-carbon groups required for the biosynthesis of purines, thymidylate, methionine, and other important biomolecules. Also exhibits THF-independent aldolase activity toward beta-hydroxyamino acids, producing glycine and aldehydes, via a retro-aldol mechanism. This is Serine hydroxymethyltransferase from Staphylococcus saprophyticus subsp. saprophyticus (strain ATCC 15305 / DSM 20229 / NCIMB 8711 / NCTC 7292 / S-41).